Here is a 1088-residue protein sequence, read N- to C-terminus: DNA mismatch repair protein MutS (1088 aa).

The disordered stretch occupies residues 498–579; sequence PLDGITPPDD…SFEMPSLHGH (82 aa). Over residues 537 to 546 the composition is skewed to acidic residues; the sequence is DLFDEEEEQE. 816-823 contributes to the ATP binding site; that stretch reads GPNMSGKS. Residues 1000–1048 are disordered; sequence LERRAPRSTPQPAPERTEERPAAGRPTARSHSAARGDPPRAPDGQLSLF.

This sequence belongs to the DNA mismatch repair MutS family.

Its function is as follows. This protein is involved in the repair of mismatches in DNA. It is possible that it carries out the mismatch recognition step. This protein has a weak ATPase activity. In Roseiflexus castenholzii (strain DSM 13941 / HLO8), this protein is DNA mismatch repair protein MutS.